A 458-amino-acid polypeptide reads, in one-letter code: cAMP-dependent protein kinase regulatory subunit (458 aa).

Residues 28 to 222 (QFAANYFNKK…GLESAVGKNF (195 aa)) form a dimerization and phosphorylation region. At Ser184 the chain carries Phosphoserine. 3',5'-cyclic AMP contacts are provided by residues 223–338 (LFNK…FLKS), Glu288, Arg297, 341–457 (LLKS…RADK), Glu407, and Arg416.

The protein belongs to the cAMP-dependent kinase regulatory chain family. As to quaternary structure, tetramer, composed of 2 regulatory (R) and 2 catalytic (C) subunits. In the presence of cAMP it dissociates into 2 active monomeric C subunits and an R dimer.

This Eremothecium gossypii (strain ATCC 10895 / CBS 109.51 / FGSC 9923 / NRRL Y-1056) (Yeast) protein is cAMP-dependent protein kinase regulatory subunit (PKAR).